We begin with the raw amino-acid sequence, 350 residues long: Holliday junction branch migration complex subunit RuvB (350 aa).

A disordered region spans residues 1–20; it reads MIEADRLITASPREREEQQD. The segment at 4–184 is large ATPase domain (RuvB-L); the sequence is ADRLITASPR…FGIVQRLEFY (181 aa). Residues isoleucine 23, arginine 24, glycine 65, lysine 68, threonine 69, threonine 70, 131 to 133, arginine 174, tyrosine 184, and arginine 221 each bind ATP; that span reads EDF. Position 69 (threonine 69) interacts with Mg(2+). The tract at residues 185-255 is small ATPAse domain (RuvB-S); it reads GIDDLATIVT…IADQALNLLD (71 aa). The tract at residues 258–350 is head domain (RuvB-H); sequence ERGFDHSDRR…SGDLFAVSDE (93 aa). The DNA site is built by arginine 294, arginine 313, and arginine 318.

The protein belongs to the RuvB family. Homohexamer. Forms an RuvA(8)-RuvB(12)-Holliday junction (HJ) complex. HJ DNA is sandwiched between 2 RuvA tetramers; dsDNA enters through RuvA and exits via RuvB. An RuvB hexamer assembles on each DNA strand where it exits the tetramer. Each RuvB hexamer is contacted by two RuvA subunits (via domain III) on 2 adjacent RuvB subunits; this complex drives branch migration. In the full resolvosome a probable DNA-RuvA(4)-RuvB(12)-RuvC(2) complex forms which resolves the HJ.

Its subcellular location is the cytoplasm. It carries out the reaction ATP + H2O = ADP + phosphate + H(+). Functionally, the RuvA-RuvB-RuvC complex processes Holliday junction (HJ) DNA during genetic recombination and DNA repair, while the RuvA-RuvB complex plays an important role in the rescue of blocked DNA replication forks via replication fork reversal (RFR). RuvA specifically binds to HJ cruciform DNA, conferring on it an open structure. The RuvB hexamer acts as an ATP-dependent pump, pulling dsDNA into and through the RuvAB complex. RuvB forms 2 homohexamers on either side of HJ DNA bound by 1 or 2 RuvA tetramers; 4 subunits per hexamer contact DNA at a time. Coordinated motions by a converter formed by DNA-disengaged RuvB subunits stimulates ATP hydrolysis and nucleotide exchange. Immobilization of the converter enables RuvB to convert the ATP-contained energy into a lever motion, pulling 2 nucleotides of DNA out of the RuvA tetramer per ATP hydrolyzed, thus driving DNA branch migration. The RuvB motors rotate together with the DNA substrate, which together with the progressing nucleotide cycle form the mechanistic basis for DNA recombination by continuous HJ branch migration. Branch migration allows RuvC to scan DNA until it finds its consensus sequence, where it cleaves and resolves cruciform DNA. In Ectopseudomonas mendocina (strain ymp) (Pseudomonas mendocina), this protein is Holliday junction branch migration complex subunit RuvB.